The chain runs to 187 residues: UPF0340 protein SPT_0687 (187 aa).

Belongs to the UPF0340 family.

The sequence is that of UPF0340 protein SPT_0687 from Streptococcus pneumoniae (strain Taiwan19F-14).